We begin with the raw amino-acid sequence, 575 residues long: V-type ATP synthase alpha chain (575 aa).

ATP is bound at residue Gly238–Thr245.

Belongs to the ATPase alpha/beta chains family.

It catalyses the reaction ATP + H2O + 4 H(+)(in) = ADP + phosphate + 5 H(+)(out). In terms of biological role, produces ATP from ADP in the presence of a proton gradient across the membrane. The V-type alpha chain is a catalytic subunit. This chain is V-type ATP synthase alpha chain, found in Borreliella burgdorferi (strain ZS7) (Borrelia burgdorferi).